The primary structure comprises 662 residues: Tubulin--tyrosine ligase-like protein 12 (662 aa).

A TTL domain is found at 324–660; sequence LKKRKIKVYA…LDEIDPTKVT (337 aa). ATP-binding positions include 472-475, lysine 491, and aspartate 493; that span reads CEYI.

The protein belongs to the tubulin--tyrosine ligase family.

Functionally, regulates microtubule dynamics in uterine muscle cells. This chain is Tubulin--tyrosine ligase-like protein 12, found in Caenorhabditis elegans.